The following is a 508-amino-acid chain: MNKSYKILLTGSVIAIGAMGLMANSINSREAERKEINTGPVVQAEGVASKNEEWYRYYPREYDSWKQTKKSDKITDLLREKPQLAIIWAGYGFAKDYNAPRGHFYAIQDNINTLRTGAPTGPSNGPMPTACWTCKSPDVPRLMDEVGENEFFTGKWAKYGNQIVNPIGCADCHNSQTGNLGFSRPHLGRALEASGVNLDEITFQDMRTLVCAQCHVEYYFRPTEWTDKTGKTKTAKVVTLPWAKGLSAENMEEYYDEYSFKDWTHKISKAPMLKAQHPGYELFSKGIHAQNGVSCADCHMPYKQQGSIKYTDHNIGNPLDDIASTCLTCHRDSEKAFRDRVASKLERKEQLMKMAMDTLAAAHLEAGKAWELGATEAEMQPVLELLRSGQWLWDYSIASHGSFFHSPEETLRLLGVANDKGGKARIKLAAILAQHGLIGYQVPDFSTKEKAQALAGVPLQKLITEKKAFESTLLEQWNEEAVKAGRLDPKTLEGMSNKSSWSQTELSQ.

Positions 1-23 are cleaved as a signal peptide; it reads MNKSYKILLTGSVIAIGAMGLMA. Histidine 103 lines the heme c pocket. Heme-binding residues include cysteine 131, cysteine 134, and lysine 135. Residues cysteine 169, cysteine 172, histidine 173, cysteine 211, cysteine 214, and histidine 215 each contribute to the heme c site. Residues glutamate 217, tyrosine 218, lysine 274, and glutamine 276 each coordinate Ca(2+). Tyrosine 218 is a binding site for substrate. Histidine 277 is a binding site for substrate. Heme c is bound by residues histidine 288, cysteine 295, cysteine 298, histidine 299, histidine 313, cysteine 326, cysteine 329, histidine 330, and histidine 405. Residues 485–508 are disordered; sequence GRLDPKTLEGMSNKSSWSQTELSQ. The span at 494 to 508 shows a compositional bias: polar residues; that stretch reads GMSNKSSWSQTELSQ.

The protein belongs to the cytochrome c-552 family. Requires Ca(2+) as cofactor. It depends on heme c as a cofactor.

It is found in the periplasm. It catalyses the reaction 6 Fe(III)-[cytochrome c] + NH4(+) + 2 H2O = 6 Fe(II)-[cytochrome c] + nitrite + 8 H(+). It participates in nitrogen metabolism; nitrate reduction (assimilation). Its function is as follows. Catalyzes the reduction of nitrite to ammonia, consuming six electrons in the process. This chain is Cytochrome c-552, found in Desulfotalea psychrophila (strain LSv54 / DSM 12343).